We begin with the raw amino-acid sequence, 253 residues long: Phosphate import ATP-binding protein PstB (253 aa).

One can recognise an ABC transporter domain in the interval 5-248; it reads IQVRDLNAYY…PSDKRTEDYI (244 aa). 37–44 provides a ligand contact to ATP; that stretch reads GPSGCGKS.

The protein belongs to the ABC transporter superfamily. Phosphate importer (TC 3.A.1.7) family. As to quaternary structure, the complex is composed of two ATP-binding proteins (PstB), two transmembrane proteins (PstC and PstA) and a solute-binding protein (PstS).

It localises to the cell inner membrane. It carries out the reaction phosphate(out) + ATP + H2O = ADP + 2 phosphate(in) + H(+). Functionally, part of the ABC transporter complex PstSACB involved in phosphate import. Responsible for energy coupling to the transport system. This chain is Phosphate import ATP-binding protein PstB, found in Koribacter versatilis (strain Ellin345).